The sequence spans 438 residues: Serine hydroxymethyltransferase (438 aa).

Residues Leu-133 and 137 to 139 (GHL) each bind (6S)-5,6,7,8-tetrahydrofolate. Lys-242 is modified (N6-(pyridoxal phosphate)lysine).

This sequence belongs to the SHMT family. As to quaternary structure, homodimer. Pyridoxal 5'-phosphate serves as cofactor.

The protein resides in the cytoplasm. It catalyses the reaction (6R)-5,10-methylene-5,6,7,8-tetrahydrofolate + glycine + H2O = (6S)-5,6,7,8-tetrahydrofolate + L-serine. The protein operates within one-carbon metabolism; tetrahydrofolate interconversion. Its pathway is amino-acid biosynthesis; glycine biosynthesis; glycine from L-serine: step 1/1. Catalyzes the reversible interconversion of serine and glycine with tetrahydrofolate (THF) serving as the one-carbon carrier. This reaction serves as the major source of one-carbon groups required for the biosynthesis of purines, thymidylate, methionine, and other important biomolecules. Also exhibits THF-independent aldolase activity toward beta-hydroxyamino acids, producing glycine and aldehydes, via a retro-aldol mechanism. This is Serine hydroxymethyltransferase from Brucella suis (strain ATCC 23445 / NCTC 10510).